The sequence spans 510 residues: Probable allantoinase 2 (510 aa).

6 residues coordinate Zn(2+): His97, His99, Lys185, His228, His287, and Asp360. The residue at position 185 (Lys185) is an N6-carboxylysine.

The protein belongs to the metallo-dependent hydrolases superfamily. Allantoinase family. Homotetramer. It depends on Zn(2+) as a cofactor. Post-translationally, carboxylation allows a single lysine to coordinate two zinc ions.

It carries out the reaction (S)-allantoin + H2O = allantoate + H(+). The protein operates within nitrogen metabolism; (S)-allantoin degradation; allantoate from (S)-allantoin: step 1/1. In Dictyostelium discoideum (Social amoeba), this protein is Probable allantoinase 2 (allB2).